Reading from the N-terminus, the 450-residue chain is Glutathione reductase (450 aa).

Residues serine 14, glycine 15, glutamate 34, threonine 41, cysteine 42, and lysine 50 each coordinate FAD. Serine 14 lines the glutathione pocket. A disulfide bridge links cysteine 42 with cysteine 47. Tyrosine 99 is a glutathione binding site. FAD is bound at residue alanine 115. NADP(+) is bound by residues alanine 175, isoleucine 178, glutamate 181, arginine 198, arginine 204, and glycine 262. Aspartate 303 is a binding site for FAD. Glutamate 309 contributes to the NADP(+) binding site. Threonine 311 is a binding site for FAD. Arginine 319 is a binding site for glutathione. NADP(+) is bound at residue valine 342. Residue histidine 439 coordinates FAD. Histidine 439 functions as the Proton acceptor in the catalytic mechanism.

This sequence belongs to the class-I pyridine nucleotide-disulfide oxidoreductase family. As to quaternary structure, homodimer. FAD is required as a cofactor.

Its subcellular location is the cytoplasm. The enzyme catalyses 2 glutathione + NADP(+) = glutathione disulfide + NADPH + H(+). Its function is as follows. Catalyzes the reduction of glutathione disulfide (GSSG) to reduced glutathione (GSH). Constitutes the major mechanism to maintain a high GSH:GSSG ratio in the cytosol. The chain is Glutathione reductase (gor) from Escherichia coli (strain K12).